Here is a 253-residue protein sequence, read N- to C-terminus: Imidazole glycerol phosphate synthase subunit HisF (253 aa).

Active-site residues include aspartate 11 and aspartate 130.

The protein belongs to the HisA/HisF family. Heterodimer of HisH and HisF.

The protein localises to the cytoplasm. It catalyses the reaction 5-[(5-phospho-1-deoxy-D-ribulos-1-ylimino)methylamino]-1-(5-phospho-beta-D-ribosyl)imidazole-4-carboxamide + L-glutamine = D-erythro-1-(imidazol-4-yl)glycerol 3-phosphate + 5-amino-1-(5-phospho-beta-D-ribosyl)imidazole-4-carboxamide + L-glutamate + H(+). Its pathway is amino-acid biosynthesis; L-histidine biosynthesis; L-histidine from 5-phospho-alpha-D-ribose 1-diphosphate: step 5/9. In terms of biological role, IGPS catalyzes the conversion of PRFAR and glutamine to IGP, AICAR and glutamate. The HisF subunit catalyzes the cyclization activity that produces IGP and AICAR from PRFAR using the ammonia provided by the HisH subunit. In Geotalea daltonii (strain DSM 22248 / JCM 15807 / FRC-32) (Geobacter daltonii), this protein is Imidazole glycerol phosphate synthase subunit HisF.